The following is a 902-amino-acid chain: MAGRGCLELGLFCWVLLAVPVGPQPASSVPGAPLTTLTPPPQSEASMLSLNLGLNFKFHLRGPAAVWGSPVTETHPLSPGLGQESEEDLEGDLRTDPLWELLVGSPGNYVPEWGSAEGSFTPWASSLPPESTSPLSGPTKRPTAPSQPRMSTVTWATALTATAPPTSAPRPRQSELELKFDVALRAGAAPTLGHRSLPLLPSLRASLAEIAGRLGPFGFFGTTLSPLRNFSSQSYQGTTAQPSFASEVSDFPGLFGTTGSLPPPLLERKFSSPSPLDSVASPSSASIKTTPVQHDPTVSTSDPDELSPASFGSPSAQPGCEPGSCSEPELSDDSGQPPASPLPLFFLTLEADWAEARARWGLAWEAHVYGAGALFGLVALLALLSLALLPWRCPPGAPCLALLDLLLLSAGTTRAFPLFYDAYGHRDRLPALAWLLLQDLPLPCLAAGLGLACLLLARPRTPRCPIGLAALLLLGLGLAAAAALGSAVHRPLRPLRLASRGLHAFLAAFLSGLLLALSCWGGRRRRAGAPLGGSGFKGATPVPQVRSPFAPRESWRRAARTAPVAGTFGLLSGALQGYEVLHALGYGGQTGLEGPWPWWAFQLGLRLGEVGVALPLALLGLYPALCSPRVPRRCWAKLFRLSPGHAAPLLPGGWVPGIRDKEPLGSAIARGDAELLQLCALAGPGPDLLLQGGSCPGFEGARANTTQSPASSPSSDCTVDFRPPSPINLRRSIEEALCSEALLAPGLFQGPAFGDALSGLGLYRTISLGNKTGAGPSEKSEKVPGSPAPPELPSPGAWPPGSSASSGSLCGLSRDSSSMLLCSSPDRPPRCPLVCVLSPPRPSESSPSLPASGSYQALSPPSRDSPEHASELQAEEALLQEQFLDACRQIDELSMGSDTIDL.

A signal peptide spans 1-18 (MAGRGCLELGLFCWVLLA). Disordered stretches follow at residues 120-149 (FTPW…SQPR) and 262-337 (PPPL…SGQP). Over residues 125 to 139 (SSLPPESTSPLSGPT) the composition is skewed to low complexity. Residues 271–301 (SSPSPLDSVASPSSASIKTTPVQHDPTVSTS) are compositionally biased toward polar residues. The next 5 membrane-spanning stretches (helical) occupy residues 371-391 (AGAL…LLPW), 393-413 (CPPG…AGTT), 431-451 (ALAW…GLGL), 465-485 (PIGL…AALG), and 501-521 (GLHA…SCWG). S642 carries the post-translational modification Phosphoserine. 3 disordered regions span residues 700 to 721 (GARA…TVDF), 771 to 811 (KTGA…SLCG), and 836 to 872 (VLSP…ASEL). A compositionally biased stretch (polar residues) spans 703-717 (ANTTQSPASSPSSDC). The segment covering 786–798 (SPAPPELPSPGAW) has biased composition (pro residues). 2 stretches are compositionally biased toward low complexity: residues 799–811 (PPGS…SLCG) and 843–854 (SESSPSLPASGS).

It localises to the membrane. This chain is Proline-rich transmembrane protein 4 (Prrt4), found in Rattus norvegicus (Rat).